The following is a 408-amino-acid chain: Guanine nucleotide-binding protein alpha-14 subunit (408 aa).

Residues histidine 38–lysine 45, glycine 78–serine 85, asparagine 201–lysine 205, valine 216–threonine 222, aspartate 241–glutamine 245, phenylalanine 285–phenylalanine 288, asparagine 325–aspartate 328, and alanine 380 each bind GTP. In terms of domain architecture, G-alpha spans serine 70–serine 408. The interval lysine 73–threonine 86 is G1 motif. Residue serine 85 participates in Mg(2+) binding. Residues aspartate 214–threonine 222 form a G2 motif region. A Mg(2+)-binding site is contributed by threonine 222. Residues leucine 237–arginine 246 form a G3 motif region. The segment at leucine 321 to aspartate 328 is G4 motif. The segment at threonine 378–threonine 383 is G5 motif.

Belongs to the G-alpha family. As to quaternary structure, g proteins are composed of 3 units; alpha, beta and gamma. The alpha chain contains the guanine nucleotide binding site.

Guanine nucleotide-binding proteins (G proteins) are involved as modulators or transducers in various transmembrane signaling systems. This chain is Guanine nucleotide-binding protein alpha-14 subunit (gpa-14), found in Caenorhabditis briggsae.